Here is a 347-residue protein sequence, read N- to C-terminus: 4-hydroxy-2-oxovalerate aldolase (347 aa).

The region spanning 2-252 (ILISDATLRD…DTRTTFERVM (251 aa)) is the Pyruvate carboxyltransferase domain. A substrate-binding site is contributed by 10-11 (RD). A Mn(2+)-binding site is contributed by Asp-11. His-14 acts as the Proton acceptor in catalysis. Positions 164 and 191 each coordinate substrate. The Mn(2+) site is built by His-191 and His-193.

Belongs to the 4-hydroxy-2-oxovalerate aldolase family.

It catalyses the reaction (S)-4-hydroxy-2-oxopentanoate = acetaldehyde + pyruvate. The sequence is that of 4-hydroxy-2-oxovalerate aldolase (mhpE) from Burkholderia pseudomallei (strain 1710b).